Reading from the N-terminus, the 419-residue chain is MQGLLILSVLLGAALGKEDFVGHQVLRITAADEAEVQTVKELEDLEHLQLDFWRGPGQPGSPIDVRVPFPSLQAVKVFLEAHGIRYRIMIEDVQSLLDEEQEQMFASQSRARSTNTFNYATYHTLDEIYDFMDLLVAEHPQLVSKLQIGRSYEGRPIYVLKFSTGGSNRPAIWIDLGIHSREWITQATGVWFAKKFTEDYGQDPSFTAILDSMDIFLEIVTNPDGFAFTHSQNRLWRKTRSVTSSSLCVGVDANRNWDAGFGKAGASSSPCSETYHGKYANSEVEVKSIVDFVKDHGNFKAFLSIHSYSQLLLYPYGYTTQSIPDKTELNQVAKSAVEALKSLYGTSYKYGSIITTIYQASGGSIDWSYNQGIKYSFTFELRDTGRYGFLLPASQIIPTAQETWLGVLTIMEHTLNNLY.

Positions 1–16 (MQGLLILSVLLGAALG) are cleaved as a signal peptide. The propeptide at 17-110 (KEDFVGHQVL…QEQMFASQSR (94 aa)) is activation peptide. The Peptidase M14 domain maps to 121-414 (TYHTLDEIYD…LGVLTIMEHT (294 aa)). Zn(2+) is bound by residues His179 and Glu182. Substrate-binding positions include 179–182 (HSRE), Arg237, and 254–255 (NR). A disulfide bridge connects residues Cys248 and Cys271. A Zn(2+)-binding site is contributed by His306. Residues 307 to 308 (SY) and Tyr358 contribute to the substrate site. Glu380 functions as the Proton donor/acceptor in the catalytic mechanism.

It belongs to the peptidase M14 family. In terms of assembly, monomer. May form a complex with proelastase 2. The cofactor is Zn(2+). In terms of tissue distribution, pancreas.

The protein resides in the secreted. The catalysed reaction is Release of a C-terminal amino acid, but little or no action with -Asp, -Glu, -Arg, -Lys or -Pro.. It catalyses the reaction leukotriene C4 + H2O = leukotriene F4 + glycine. Inhibited by interaction with the S.magnifica carboxypeptidase inhibitor SmCI. Its function is as follows. Carboxypeptidase that catalyzes the release of a C-terminal amino acid, but has little or no action with -Asp, -Glu, -Arg, -Lys or -Pro. Catalyzes the conversion of leukotriene C4 to leukotriene F4 via the hydrolysis of an amide bond. The protein is Carboxypeptidase A1 (CPA1) of Bos taurus (Bovine).